Here is a 381-residue protein sequence, read N- to C-terminus: Probable serine/threonine-protein kinase PBL25 (381 aa).

Residue C3 is the site of S-palmitoyl cysteine attachment. A disordered region spans residues 16–41 (GSSMPAPYKQPNSPKRTTGEVVAKNA). At T54 the chain carries Phosphothreonine. A Protein kinase domain is found at 65–342 (FRQECLIGEG…SDVITALSFL (278 aa)). ATP contacts are provided by residues 71–79 (IGEGGFGRV) and K94. A Phosphotyrosine modification is found at Y139. D192 acts as the Proton acceptor in catalysis. Phosphoserine is present on residues S196 and S226. T232 is modified (phosphothreonine). A Phosphotyrosine modification is found at Y240. Positions 347-381 (NSSNTGSNHLQQNRSNKYQDAVQWDSSPRYANSQM) are disordered. A compositionally biased stretch (polar residues) spans 355–381 (HLQQNRSNKYQDAVQWDSSPRYANSQM).

It belongs to the protein kinase superfamily. Ser/Thr protein kinase family.

It localises to the cell membrane. It catalyses the reaction L-seryl-[protein] + ATP = O-phospho-L-seryl-[protein] + ADP + H(+). It carries out the reaction L-threonyl-[protein] + ATP = O-phospho-L-threonyl-[protein] + ADP + H(+). Its function is as follows. May be involved in plant defense signaling. The chain is Probable serine/threonine-protein kinase PBL25 from Arabidopsis thaliana (Mouse-ear cress).